The sequence spans 601 residues: NAD-dependent malic enzyme 59 kDa isoform, mitochondrial (601 aa).

Residues 1 to 18 constitute a mitochondrion transit peptide; sequence MWRVARSAASTFRRTRRL. The active-site Proton donor is the Tyr-129. NAD(+) is bound at residue Arg-182. The Proton acceptor role is filled by Lys-200. Positions 271, 272, and 295 each coordinate a divalent metal cation. Positions 295 and 444 each coordinate NAD(+).

This sequence belongs to the malic enzymes family. Heterodimer of two related subunits. It depends on Mg(2+) as a cofactor. Requires Mn(2+) as cofactor.

The protein localises to the mitochondrion matrix. The catalysed reaction is (S)-malate + NAD(+) = pyruvate + CO2 + NADH. The protein is NAD-dependent malic enzyme 59 kDa isoform, mitochondrial of Solanum tuberosum (Potato).